Reading from the N-terminus, the 433-residue chain is Probable RNA 3'-terminal phosphate cyclase (433 aa).

The span at 1–10 shows a compositional bias: low complexity; the sequence is MGKNKNYNKN. The tract at residues 1-28 is disordered; that stretch reads MGKNKNYNKNQFKKSKTNNDTTVAQQQQ. The segment covering 18–28 has biased composition (polar residues); it reads NNDTTVAQQQQ. Residues Gln137 and 328–332 contribute to the ATP site; that span reads YLQDQ. The active-site Tele-AMP-histidine intermediate is the His354. Residues 400 to 433 are disordered; it reads LNNNNNNSNSNTTTTTTTTTISTTTIDNQNSEEK. The segment covering 401–425 has biased composition (low complexity); it reads NNNNNNSNSNTTTTTTTTTISTTTI.

The protein belongs to the RNA 3'-terminal cyclase family. Type 1 subfamily.

Its subcellular location is the nucleus. The protein localises to the nucleoplasm. The catalysed reaction is a 3'-end 3'-phospho-ribonucleotide-RNA + ATP = a 3'-end 2',3'-cyclophospho-ribonucleotide-RNA + AMP + diphosphate. Its function is as follows. Catalyzes the conversion of 3'-phosphate to a 2',3'-cyclic phosphodiester at the end of RNA. The mechanism of action of the enzyme occurs in 3 steps: (A) adenylation of the enzyme by ATP; (B) transfer of adenylate to an RNA-N3'P to produce RNA-N3'PP5'A; (C) and attack of the adjacent 2'-hydroxyl on the 3'-phosphorus in the diester linkage to produce the cyclic end product. The biological role of this enzyme is unknown but it is likely to function in some aspects of cellular RNA processing. This is Probable RNA 3'-terminal phosphate cyclase (rtca) from Dictyostelium discoideum (Social amoeba).